The sequence spans 276 residues: MKLCGFEVGLNQPLFLIAGPCVIESLQLQLDTAGVLKEITSKLGLNFIFKSSFDKANRTSGSSFRGPGLEEGLKVLEAVKTQIGVPVLTDVHEYTPIDEVATVVDVLQTPAFLVRQTDFIRNVCAVGKPVNIKKGQFLSPWDMKPVVEKAKSTGNSQILVCERGASFGYNNLVSDMRSLAVMRETGCPVVFDATHSVQLPGAQGGRSGGQREFVPVLARAAVAVGISGLFAETHPDPPNALSDGPNAWPLHTMAMLLETLVELDAVTKKRGFLEQD.

This sequence belongs to the KdsA family.

The protein resides in the cytoplasm. It catalyses the reaction D-arabinose 5-phosphate + phosphoenolpyruvate + H2O = 3-deoxy-alpha-D-manno-2-octulosonate-8-phosphate + phosphate. It participates in carbohydrate biosynthesis; 3-deoxy-D-manno-octulosonate biosynthesis; 3-deoxy-D-manno-octulosonate from D-ribulose 5-phosphate: step 2/3. Its pathway is bacterial outer membrane biogenesis; lipopolysaccharide biosynthesis. This is 2-dehydro-3-deoxyphosphooctonate aldolase from Xylella fastidiosa (strain 9a5c).